Reading from the N-terminus, the 882-residue chain is Exo-beta-D-glucosaminidase ARB_07888 (882 aa).

A signal peptide spans 1 to 21 (MWFVFRPAAIPALLLTLGVSA). Residues 22–31 (LSPLRPLVST) constitute a propeptide that is removed on maturation. Residues N86, N200, N234, N237, N287, and N442 are each glycosylated (N-linked (GlcNAc...) asparagine). The Proton donor role is filled by D466. Residue E538 is the Nucleophile of the active site. 3 N-linked (GlcNAc...) asparagine glycosylation sites follow: N688, N773, and N816.

It belongs to the glycosyl hydrolase 2 family. In terms of assembly, monomer.

It localises to the secreted. The catalysed reaction is Hydrolysis of chitosan or chitosan oligosaccharides to remove successive D-glucosamine residues from the non-reducing termini.. Its function is as follows. Hydrolyzes chitosan and chitooligosaccharides with retention of anomeric configuration. This Arthroderma benhamiae (strain ATCC MYA-4681 / CBS 112371) (Trichophyton mentagrophytes) protein is Exo-beta-D-glucosaminidase ARB_07888.